The primary structure comprises 80 residues: Exodeoxyribonuclease 7 small subunit (80 aa).

The protein belongs to the XseB family. In terms of assembly, heterooligomer composed of large and small subunits.

It is found in the cytoplasm. It carries out the reaction Exonucleolytic cleavage in either 5'- to 3'- or 3'- to 5'-direction to yield nucleoside 5'-phosphates.. Its function is as follows. Bidirectionally degrades single-stranded DNA into large acid-insoluble oligonucleotides, which are then degraded further into small acid-soluble oligonucleotides. The polypeptide is Exodeoxyribonuclease 7 small subunit (Maridesulfovibrio salexigens (strain ATCC 14822 / DSM 2638 / NCIMB 8403 / VKM B-1763) (Desulfovibrio salexigens)).